A 199-amino-acid polypeptide reads, in one-letter code: DnaJ homolog subfamily C member 5B (199 aa).

A phosphoserine mark is found at Ser14 and Ser16. The region spanning Ala19–Gly84 is the J domain.

As to quaternary structure, interacts with the chaperone complex consisting of HSC70 and SGTA. Post-translationally, palmitoylated.

The protein resides in the membrane. The polypeptide is DnaJ homolog subfamily C member 5B (DNAJC5B) (Sus scrofa (Pig)).